The following is a 342-amino-acid chain: 4-amino-5-hydroxymethyl-2-methylpyrimidine phosphate synthase (342 aa).

Lys-62 is subject to N6-(pyridoxal phosphate)lysine. The active site involves His-66. 115-118 (GEFG) contributes to the pyridoxal 5'-phosphate binding site. The short motif at 195 to 199 (CCCFC) is the CCCFC; essential for catalytic activity, may be the site of iron coordination element.

The protein belongs to the NMT1/THI5 family. In terms of assembly, homodimer. The cofactor is Fe cation.

It carries out the reaction N(6)-(pyridoxal phosphate)-L-lysyl-[4-amino-5-hydroxymethyl-2-methylpyrimidine phosphate synthase] + L-histidyl-[4-amino-5-hydroxymethyl-2-methylpyrimidine phosphate synthase] + 2 Fe(3+) + 4 H2O = L-lysyl-[4-amino-5-hydroxymethyl-2-methylpyrimidine phosphate synthase] + (2S)-2-amino-5-hydroxy-4-oxopentanoyl-[4-amino-5-hydroxymethyl-2-methylpyrimidine phosphate synthase] + 4-amino-2-methyl-5-(phosphooxymethyl)pyrimidine + 3-oxopropanoate + 2 Fe(2+) + 2 H(+). It participates in cofactor biosynthesis; thiamine diphosphate biosynthesis. Functionally, responsible for the formation of the pyrimidine heterocycle in the thiamine biosynthesis pathway. Catalyzes the formation of hydroxymethylpyrimidine phosphate (HMP-P) from histidine and pyridoxal phosphate (PLP). The protein uses PLP and the active site histidine to form HMP-P, generating an inactive enzyme. The enzyme can only undergo a single turnover, which suggests it is a suicide enzyme. The protein is 4-amino-5-hydroxymethyl-2-methylpyrimidine phosphate synthase of Aspergillus parasiticus.